Consider the following 322-residue polypeptide: tRNA U34 carboxymethyltransferase (322 aa).

Residues lysine 91, tryptophan 105, lysine 110, glycine 129, 179–180 (LE), methionine 195, tyrosine 199, and arginine 314 each bind carboxy-S-adenosyl-L-methionine.

It belongs to the class I-like SAM-binding methyltransferase superfamily. CmoB family. In terms of assembly, homotetramer.

It carries out the reaction carboxy-S-adenosyl-L-methionine + 5-hydroxyuridine(34) in tRNA = 5-carboxymethoxyuridine(34) in tRNA + S-adenosyl-L-homocysteine + H(+). Its function is as follows. Catalyzes carboxymethyl transfer from carboxy-S-adenosyl-L-methionine (Cx-SAM) to 5-hydroxyuridine (ho5U) to form 5-carboxymethoxyuridine (cmo5U) at position 34 in tRNAs. The polypeptide is tRNA U34 carboxymethyltransferase (Pseudomonas aeruginosa (strain LESB58)).